The following is a 378-amino-acid chain: Probable pectin lyase A (378 aa).

An N-terminal signal peptide occupies residues 1 to 18 (MKYASFLALVGFITSTSA). 2 disulfide bridges follow: Cys-81-Cys-100 and Cys-90-Cys-224. Residue Arg-254 is part of the active site. Cys-321 and Cys-329 are joined by a disulfide.

The protein belongs to the polysaccharide lyase 1 family.

Its subcellular location is the secreted. It catalyses the reaction Eliminative cleavage of (1-&gt;4)-alpha-D-galacturonan methyl ester to give oligosaccharides with 4-deoxy-6-O-methyl-alpha-D-galact-4-enuronosyl groups at their non-reducing ends.. Pectinolytic enzymes consist of four classes of enzymes: pectin lyase, polygalacturonase, pectin methylesterase and rhamnogalacturonase. Among pectinolytic enzymes, pectin lyase is the most important in depolymerization of pectin, since it cleaves internal glycosidic bonds of highly methylated pectins. In Aspergillus clavatus (strain ATCC 1007 / CBS 513.65 / DSM 816 / NCTC 3887 / NRRL 1 / QM 1276 / 107), this protein is Probable pectin lyase A (pelA).